The primary structure comprises 242 residues: MSSPAEYYNSLPPISKAYGTLCFFATVLCQLQILNPPFLALYYPFVFKKFQIWRLFTSFFFLGKFSINFGIRLLMIARYGVQLEKGAFEKRTADFLWMMIFGAISLLALSAIPFLDIYFLGVPMVSMLLYVWSREYPNSQISMYGLVQLRSFYLPWAMLGLDVIFGSEILPGLLGILVGHTYYFLSVLHPLATGKNYLKTPMWVHKIVARFRIGVQANAPVRPAAANTGSGAFRGRSYRLSQ.

The Cytoplasmic segment spans residues 1–20; sequence MSSPAEYYNSLPPISKAYGT. Residues 21-41 form a helical membrane-spanning segment; sequence LCFFATVLCQLQILNPPFLAL. The Lumenal segment spans residues 42-55; the sequence is YYPFVFKKFQIWRL. A helical membrane pass occupies residues 56–76; sequence FTSFFFLGKFSINFGIRLLMI. At 77-94 the chain is on the cytoplasmic side; sequence ARYGVQLEKGAFEKRTAD. The chain crosses the membrane as a helical span at residues 95–115; that stretch reads FLWMMIFGAISLLALSAIPFL. At 116-157 the chain is on the lumenal side; the sequence is DIYFLGVPMVSMLLYVWSREYPNSQISMYGLVQLRSFYLPWA. A helical membrane pass occupies residues 158-178; that stretch reads MLGLDVIFGSEILPGLLGILV. Over 179 to 242 the chain is Cytoplasmic; sequence GHTYYFLSVL…FRGRSYRLSQ (64 aa).

Belongs to the derlin family. Seedling shoots and roots.

The protein resides in the endoplasmic reticulum membrane. In terms of biological role, may be involved in the degradation process of specific misfolded endoplasmic reticulum (ER) luminal proteins. The polypeptide is Derlin-1 (DER1) (Oryza sativa subsp. japonica (Rice)).